We begin with the raw amino-acid sequence, 468 residues long: 6-phospho-beta-galactosidase (468 aa).

5 residues coordinate D-galactose 6-phosphate: Gln-19, His-116, Asn-159, Glu-160, and Asn-297. Glu-160 (proton donor) is an active-site residue. The Nucleophile role is filled by Glu-375. Residues Ser-428, Trp-429, Lys-435, and Tyr-437 each contribute to the D-galactose 6-phosphate site.

The protein belongs to the glycosyl hydrolase 1 family.

The catalysed reaction is a 6-phospho-beta-D-galactoside + H2O = D-galactose 6-phosphate + an alcohol. Its pathway is carbohydrate metabolism; lactose degradation; D-galactose 6-phosphate and beta-D-glucose from lactose 6-phosphate: step 1/1. The protein is 6-phospho-beta-galactosidase of Streptococcus pyogenes serotype M12 (strain MGAS2096).